Consider the following 437-residue polypeptide: Nickel-cobalt-cadmium resistance protein NccC (437 aa).

An N-terminal signal peptide occupies residues 1–48; sequence MGAVLKAEANIFRSHPFRPMNQATPKKLRSAPCIGVALLLMATGSIQA.

It belongs to the outer membrane factor (OMF) (TC 1.B.17) family.

In terms of biological role, component of the NCC cation-efflux system that confers resistance to nickel, cobalt and cadmium. This Alcaligenes xylosoxydans xylosoxydans (Achromobacter xylosoxidans) protein is Nickel-cobalt-cadmium resistance protein NccC (nccC).